The primary structure comprises 173 residues: S-ribosylhomocysteine lyase (173 aa).

Fe cation is bound by residues histidine 54, histidine 58, and cysteine 128.

Belongs to the LuxS family. Homodimer. Fe cation is required as a cofactor.

The enzyme catalyses S-(5-deoxy-D-ribos-5-yl)-L-homocysteine = (S)-4,5-dihydroxypentane-2,3-dione + L-homocysteine. Involved in the synthesis of autoinducer 2 (AI-2) which is secreted by bacteria and is used to communicate both the cell density and the metabolic potential of the environment. The regulation of gene expression in response to changes in cell density is called quorum sensing. Catalyzes the transformation of S-ribosylhomocysteine (RHC) to homocysteine (HC) and 4,5-dihydroxy-2,3-pentadione (DPD). The polypeptide is S-ribosylhomocysteine lyase (Hydrogenovibrio crunogenus (strain DSM 25203 / XCL-2) (Thiomicrospira crunogena)).